The chain runs to 97 residues: Putative septation protein SpoVG (97 aa).

Belongs to the SpoVG family.

Its function is as follows. Essential for sporulation. Interferes with or is a negative regulator of the pathway leading to asymmetric septation. The polypeptide is Putative septation protein SpoVG (Bacillus cereus (strain 03BB102)).